The chain runs to 138 residues: Putative pre-16S rRNA nuclease (138 aa).

It belongs to the YqgF nuclease family.

It localises to the cytoplasm. Could be a nuclease involved in processing of the 5'-end of pre-16S rRNA. In Klebsiella pneumoniae (strain 342), this protein is Putative pre-16S rRNA nuclease.